A 153-amino-acid polypeptide reads, in one-letter code: Ribosome maturation factor RimP (153 aa).

It belongs to the RimP family.

It localises to the cytoplasm. Its function is as follows. Required for maturation of 30S ribosomal subunits. In Picosynechococcus sp. (strain ATCC 27264 / PCC 7002 / PR-6) (Agmenellum quadruplicatum), this protein is Ribosome maturation factor RimP.